A 326-amino-acid chain; its full sequence is dTDP-4-dehydro-6-deoxy-D-allose reductase (326 aa).

Residues 15-21 and 129-132 contribute to the NADP(+) site; these read GALGFIG and MSSS. Catalysis depends on Tyr-160, which acts as the Proton donor/acceptor. NADP(+) contacts are provided by residues Lys-164 and 187–190; that span reads PGNV.

Belongs to the NAD(P)-dependent epimerase/dehydratase family.

It carries out the reaction dTDP-6-deoxy-alpha-D-allose + NAD(+) = dTDP-4-dehydro-6-deoxy-alpha-D-allose + NADH + H(+). It catalyses the reaction dTDP-6-deoxy-alpha-D-allose + NADP(+) = dTDP-4-dehydro-6-deoxy-alpha-D-allose + NADPH + H(+). Its function is as follows. Catalyzes the stereospecific reduction of the C-4 keto group of dTDP-4-dehydro-6-deoxy-D-allose, leading to dTDP-6-deoxy-D-allose, an intermediate in the biosynthesis of the mycinose moiety of the chalcomycin antibiotic. The polypeptide is dTDP-4-dehydro-6-deoxy-D-allose reductase (chmD) (Streptomyces bikiniensis).